Here is a 949-residue protein sequence, read N- to C-terminus: Glycine dehydrogenase (decarboxylating) (949 aa).

At Lys-700 the chain carries N6-(pyridoxal phosphate)lysine.

This sequence belongs to the GcvP family. The glycine cleavage system is composed of four proteins: P, T, L and H. Pyridoxal 5'-phosphate is required as a cofactor.

It catalyses the reaction N(6)-[(R)-lipoyl]-L-lysyl-[glycine-cleavage complex H protein] + glycine + H(+) = N(6)-[(R)-S(8)-aminomethyldihydrolipoyl]-L-lysyl-[glycine-cleavage complex H protein] + CO2. Functionally, the glycine cleavage system catalyzes the degradation of glycine. The P protein binds the alpha-amino group of glycine through its pyridoxal phosphate cofactor; CO(2) is released and the remaining methylamine moiety is then transferred to the lipoamide cofactor of the H protein. This Flavobacterium johnsoniae (strain ATCC 17061 / DSM 2064 / JCM 8514 / BCRC 14874 / CCUG 350202 / NBRC 14942 / NCIMB 11054 / UW101) (Cytophaga johnsonae) protein is Glycine dehydrogenase (decarboxylating).